The following is a 641-amino-acid chain: SUMO-activating enzyme subunit 2 (641 aa).

Residues 24–29 (GAGGIG), D48, 56–59 (NLNR), K72, 95–96 (SI), and 117–122 (DNNAAR) contribute to the ATP site. Zn(2+) contacts are provided by C158 and C161. C173 serves as the catalytic Glycyl thioester intermediate. K190 is covalently cross-linked (Glycyl lysine isopeptide (Lys-Gly) (interchain with G-Cter in SUMO)). Residue K236 forms a Glycyl lysine isopeptide (Lys-Gly) (interchain with G-Cter in SUMO1) linkage. Glycyl lysine isopeptide (Lys-Gly) (interchain with G-Cter in SUMO) cross-links involve residues K257 and K275. Positions 439 and 442 each coordinate Zn(2+). Residues 546–641 (GDVPEKGPQK…EEDDDIIALD (96 aa)) form a disordered region. Polar residues predominate over residues 556 to 579 (PSEQSVKNITNGSDDGAQPSTSKA). The segment covering 582–594 (QDDVLIVDSDEES) has biased composition (acidic residues). Glycyl lysine isopeptide (Lys-Gly) (interchain with G-Cter in SUMO) cross-links involve residues K610, K612, and K623. The span at 630–641 (PVEEDDDIIALD) shows a compositional bias: acidic residues.

It belongs to the ubiquitin-activating E1 family. As to quaternary structure, heterodimer of sae1 and uba2/sae2. The heterodimer corresponds to the two domains that are encoded on a single polypeptide chain in ubiquitin-activating enzyme E1. Interacts with ube2i. In terms of processing, sumoylated with SUMO1 and SUMO2/3 and by UBC9. Sumoylation at Lys-236 inhibits enzymatic activity. Sumoylation at the C-terminal lysine cluster plays an essential role in nuclear trafficking.

Its subcellular location is the cytoplasm. The protein localises to the nucleus. It participates in protein modification; protein sumoylation. Its function is as follows. The heterodimer acts as an E1 ligase for sumo1, sumo2, and sumo3. It mediates ATP-dependent activation of sumo proteins followed by formation of a thioester bond between a sumo protein and a conserved active site cysteine residue on uba2/sae2. The sequence is that of SUMO-activating enzyme subunit 2 (uba2) from Xenopus tropicalis (Western clawed frog).